Reading from the N-terminus, the 352-residue chain is Nicotinate-nucleotide--dimethylbenzimidazole phosphoribosyltransferase (352 aa).

E316 (proton acceptor) is an active-site residue.

It belongs to the CobT family.

It catalyses the reaction 5,6-dimethylbenzimidazole + nicotinate beta-D-ribonucleotide = alpha-ribazole 5'-phosphate + nicotinate + H(+). The protein operates within nucleoside biosynthesis; alpha-ribazole biosynthesis; alpha-ribazole from 5,6-dimethylbenzimidazole: step 1/2. In terms of biological role, catalyzes the synthesis of alpha-ribazole-5'-phosphate from nicotinate mononucleotide (NAMN) and 5,6-dimethylbenzimidazole (DMB). This chain is Nicotinate-nucleotide--dimethylbenzimidazole phosphoribosyltransferase, found in Ruminiclostridium cellulolyticum (strain ATCC 35319 / DSM 5812 / JCM 6584 / H10) (Clostridium cellulolyticum).